We begin with the raw amino-acid sequence, 456 residues long: Phospholipase A1 member A (456 aa).

The first 24 residues, M1–S24, serve as a signal peptide directing secretion. The active-site Nucleophile is the S166. The active-site Charge relay system is the D190. The cysteines at positions 245 and 258 are disulfide-linked. H260 functions as the Charge relay system in the catalytic mechanism. Intrachain disulfides connect C282-C293 and C296-C304. Residue N365 is glycosylated (N-linked (GlcNAc...) asparagine).

It belongs to the AB hydrolase superfamily. Lipase family.

It localises to the secreted. It carries out the reaction a 1,2-diacyl-sn-glycero-3-phospho-L-serine + H2O = a 2-acyl-sn-glycero-3-phospho-L-serine + a fatty acid + H(+). The enzyme catalyses 1,2-di-(9Z)-octadecenoyl-sn-glycero-3-phospho-L-serine + H2O = 2-(9Z-octadecenoyl)-sn-glycero-3-phospho-L-serine + (9Z)-octadecenoate + H(+). It catalyses the reaction 1-hexadecanoyl-2-(5Z,8Z,11Z,14Z-eicosatetraenoyl)-sn-glycero-3-phospho-L-serine + H2O = 2-(5Z,8Z,11Z,14Z)-eicosatetraenoyl-sn-glycero-3-phospho-L-serine + hexadecanoate + H(+). The catalysed reaction is a 1-acyl-sn-glycero-3-phospho-L-serine + H2O = sn-glycero-3-phospho-L-serine + a fatty acid + H(+). It carries out the reaction 1-(9Z-octadecenoyl)-sn-glycero-3-phospho-L-serine + H2O = sn-glycero-3-phospho-L-serine + (9Z)-octadecenoate + H(+). Hydrolyzes the ester bond of the acyl group attached at the sn-1 position of phosphatidylserines (phospholipase A1 activity) and 1-acyl-2-lysophosphatidylserines (lysophospholipase activity) in the pathway of phosphatidylserines acyl chain remodeling. Cleaves phosphatidylserines exposed on the outer leaflet of the plasma membrane of apoptotic cells producing 2-acyl-1-lysophosphatidylserines, which in turn enhance mast cell activation and histamine production. Has no activity toward other glycerophospholipids including phosphatidylcholines, phosphatidylethanolamines, phosphatidic acids or phosphatidylinositols, or glycerolipids such as triolein. The sequence is that of Phospholipase A1 member A from Rattus norvegicus (Rat).